Here is a 77-residue protein sequence, read N- to C-terminus: UPF0337 protein CE0198 (77 aa).

Positions 1 to 77 (MGDLSNKAEG…PDVEHPEAVN (77 aa)) are disordered. 2 stretches are compositionally biased toward basic and acidic residues: residues 30 to 56 (DEGRADQTKADIKEAVSDAGDKIKDGA) and 64 to 77 (QDKDPDVEHPEAVN).

It belongs to the UPF0337 (CsbD) family.

The polypeptide is UPF0337 protein CE0198 (Corynebacterium efficiens (strain DSM 44549 / YS-314 / AJ 12310 / JCM 11189 / NBRC 100395)).